The primary structure comprises 142 residues: Small ribosomal subunit protein uS9c (142 aa).

It belongs to the universal ribosomal protein uS9 family.

It localises to the plastid. The protein localises to the chloroplast. This is Small ribosomal subunit protein uS9c (rps9) from Stigeoclonium helveticum (Green alga).